The primary structure comprises 180 residues: Adenine phosphoribosyltransferase (180 aa).

Belongs to the purine/pyrimidine phosphoribosyltransferase family. Homodimer.

The protein localises to the cytoplasm. It carries out the reaction AMP + diphosphate = 5-phospho-alpha-D-ribose 1-diphosphate + adenine. It participates in purine metabolism; AMP biosynthesis via salvage pathway; AMP from adenine: step 1/1. Its function is as follows. Catalyzes a salvage reaction resulting in the formation of AMP, that is energically less costly than de novo synthesis. This Pasteurella multocida (strain Pm70) protein is Adenine phosphoribosyltransferase.